The following is a 121-amino-acid chain: Immunoglobulin kappa variable 4-1 (121 aa).

Positions methionine 1–glycine 20 are cleaved as a signal peptide. The framework-1 stretch occupies residues aspartate 21–cysteine 43. One can recognise an Ig-like domain in the interval aspartate 21 to proline 121. A disulfide bridge connects residues cysteine 43 and cysteine 114. A complementarity-determining-1 region spans residues lysine 44–alanine 60. Positions tryptophan 61–tyrosine 75 are framework-2. The segment at tryptophan 76–serine 82 is complementarity-determining-2. The tract at residues glycine 83–cysteine 114 is framework-3. The tract at residues glutamine 115–proline 121 is complementarity-determining-3.

As to quaternary structure, immunoglobulins are composed of two identical heavy chains and two identical light chains; disulfide-linked.

The protein resides in the secreted. The protein localises to the cell membrane. Its function is as follows. V segment of the variable domain of immunoglobulins light chain that participates in the antigen recognition. Immunoglobulins, also known as antibodies, are membrane-bound or secreted glycoproteins produced by B lymphocytes. In the recognition phase of humoral immunity, the membrane-bound immunoglobulins serve as receptors which, upon binding of a specific antigen, trigger the clonal expansion and differentiation of B lymphocytes into immunoglobulins-secreting plasma cells. Secreted immunoglobulins mediate the effector phase of humoral immunity, which results in the elimination of bound antigens. The antigen binding site is formed by the variable domain of one heavy chain, together with that of its associated light chain. Thus, each immunoglobulin has two antigen binding sites with remarkable affinity for a particular antigen. The variable domains are assembled by a process called V-(D)-J rearrangement and can then be subjected to somatic hypermutations which, after exposure to antigen and selection, allow affinity maturation for a particular antigen. The polypeptide is Immunoglobulin kappa variable 4-1 (Homo sapiens (Human)).